Consider the following 606-residue polypeptide: NADH-ubiquinone oxidoreductase chain 5 (606 aa).

The next 15 helical transmembrane spans lie at 3-23 (VINLIPTLMLTSLIILTLPII), 38-58 (ITKTAVTYAFAISLIPTLLFI), 87-107 (FFSLTFMPIALFITWSIMEFS), 124-144 (LLLFLITMLILVSANNLLQLF), 180-200 (IGDMGFIMMMAWFTIHLNSWE), 216-236 (LLGLLLASAGKSAQFGLHPWL), 244-264 (TPVSALLHSSTMVMAGVFTLI), 276-296 (IQTSTLCLGAITTLFTAICAL), 304-323 (IIALSTSSQLGLMMVTIGIN), 328-350 (AFIHMCTHAFFKAMLFLSSGSII), 369-389 (MPITSTAIIIGSLALTGMPFL), 404-424 (MSYINTWALLITLIAVSMTAS), 460-480 (LILGSIFMGFLISMNTIPHTT), 483-503 (MTMPPHLKFMALAVTLLGFTV), and 586-606 (LMKLYFLSFLLSITLGLLIAL).

Belongs to the complex I subunit 5 family. As to quaternary structure, core subunit of respiratory chain NADH dehydrogenase (Complex I) which is composed of 45 different subunits.

It is found in the mitochondrion inner membrane. The catalysed reaction is a ubiquinone + NADH + 5 H(+)(in) = a ubiquinol + NAD(+) + 4 H(+)(out). In terms of biological role, core subunit of the mitochondrial membrane respiratory chain NADH dehydrogenase (Complex I) which catalyzes electron transfer from NADH through the respiratory chain, using ubiquinone as an electron acceptor. Essential for the catalytic activity and assembly of complex I. The chain is NADH-ubiquinone oxidoreductase chain 5 (MT-ND5) from Loxodonta africana (African elephant).